The sequence spans 227 residues: Octanoyltransferase (227 aa).

Residues 43–218 (ADSQDELWIV…TFTKTLGYQE (176 aa)) enclose the BPL/LPL catalytic domain. Substrate is bound by residues 82–89 (RGGQVTYH), 149–151 (SLG), and 162–164 (GLA). Catalysis depends on cysteine 180, which acts as the Acyl-thioester intermediate.

It belongs to the LipB family.

It localises to the cytoplasm. It catalyses the reaction octanoyl-[ACP] + L-lysyl-[protein] = N(6)-octanoyl-L-lysyl-[protein] + holo-[ACP] + H(+). The protein operates within protein modification; protein lipoylation via endogenous pathway; protein N(6)-(lipoyl)lysine from octanoyl-[acyl-carrier-protein]: step 1/2. Functionally, catalyzes the transfer of endogenously produced octanoic acid from octanoyl-acyl-carrier-protein onto the lipoyl domains of lipoate-dependent enzymes. Lipoyl-ACP can also act as a substrate although octanoyl-ACP is likely to be the physiological substrate. This is Octanoyltransferase from Shewanella denitrificans (strain OS217 / ATCC BAA-1090 / DSM 15013).